Reading from the N-terminus, the 196-residue chain is Large ribosomal subunit protein bL9 (196 aa).

The protein belongs to the bacterial ribosomal protein bL9 family.

Binds to the 23S rRNA. In Bradyrhizobium sp. (strain ORS 278), this protein is Large ribosomal subunit protein bL9.